Here is a 352-residue protein sequence, read N- to C-terminus: [LysW]-L-2-aminoadipate/[LysW]-L-glutamate phosphate reductase (352 aa).

Position 13–16 (13–16 (SGYT)) interacts with NADP(+). Cys153 is an active-site residue. An NADP(+)-binding site is contributed by Asn319.

The protein belongs to the NAGSA dehydrogenase family. Type 1 subfamily. LysY sub-subfamily.

The protein resides in the cytoplasm. The catalysed reaction is [amino-group carrier protein]-C-terminal-N-(1-carboxy-5-oxopentan-1-yl)-L-glutamine + phosphate + NADP(+) = [amino-group carrier protein]-C-terminal-N-(1-carboxy-5-phosphooxy-5-oxopentan-1-yl)-L-glutamine + NADPH + H(+). It carries out the reaction [amino-group carrier protein]-C-terminal-gamma-(L-glutamyl-5-semialdehyde)-L-glutamate + phosphate + NADP(+) = [amino-group carrier protein]-C-terminal-gamma-(5-phospho-L-glutamyl)-L-glutamate + NADPH + H(+). The protein operates within amino-acid biosynthesis; L-lysine biosynthesis via AAA pathway; L-lysine from L-alpha-aminoadipate (Thermus route): step 3/5. It functions in the pathway amino-acid biosynthesis; L-arginine biosynthesis. In terms of biological role, involved in both the arginine and lysine biosynthetic pathways. The protein is [LysW]-L-2-aminoadipate/[LysW]-L-glutamate phosphate reductase of Saccharolobus solfataricus (strain ATCC 35092 / DSM 1617 / JCM 11322 / P2) (Sulfolobus solfataricus).